Here is a 267-residue protein sequence, read N- to C-terminus: Hydroxyethylthiazole kinase 2 (267 aa).

Met-41 contacts substrate. ATP is bound by residues Lys-116 and Thr-166. Gly-193 provides a ligand contact to substrate.

It belongs to the Thz kinase family. It depends on Mg(2+) as a cofactor.

It catalyses the reaction 5-(2-hydroxyethyl)-4-methylthiazole + ATP = 4-methyl-5-(2-phosphooxyethyl)-thiazole + ADP + H(+). It participates in cofactor biosynthesis; thiamine diphosphate biosynthesis; 4-methyl-5-(2-phosphoethyl)-thiazole from 5-(2-hydroxyethyl)-4-methylthiazole: step 1/1. Its function is as follows. Catalyzes the phosphorylation of the hydroxyl group of 4-methyl-5-beta-hydroxyethylthiazole (THZ). The protein is Hydroxyethylthiazole kinase 2 of Streptococcus pneumoniae (strain JJA).